Here is a 98-residue protein sequence, read N- to C-terminus: NADH-ubiquinone oxidoreductase chain 4L (98 aa).

The next 3 membrane-spanning stretches (helical) occupy residues Met-1–Phe-21, Ile-26–Leu-46, and Leu-61–Leu-81.

This sequence belongs to the complex I subunit 4L family.

It is found in the mitochondrion membrane. It carries out the reaction a ubiquinone + NADH + 5 H(+)(in) = a ubiquinol + NAD(+) + 4 H(+)(out). Core subunit of the mitochondrial membrane respiratory chain NADH dehydrogenase (Complex I) that is believed to belong to the minimal assembly required for catalysis. Complex I functions in the transfer of electrons from NADH to the respiratory chain. The immediate electron acceptor for the enzyme is believed to be ubiquinone. The sequence is that of NADH-ubiquinone oxidoreductase chain 4L (nad4L) from Dictyostelium discoideum (Social amoeba).